Reading from the N-terminus, the 299-residue chain is Protein sprouty homolog 4 (299 aa).

N-acetylmethionine is present on Met-1. Disordered stretches follow at residues 50–79 (NDYI…PTPA) and 92–127 (FSGR…ASPR). Residues 92 to 107 (FSGRPSSVSSSSSTSS) are compositionally biased toward low complexity. Position 125 is a phosphoserine (Ser-125). The SPR domain occupies 166-273 (KCKECASPRT…GYDRLRRPGC (108 aa)).

It belongs to the sprouty family. In terms of assembly, interacts (via C-terminus) with TESK1 (via both C- and N-termini); the interaction inhibits TESK1 kinase activity. Interacts with RAF1. Interacts with CAV1 (via C-terminus).

Its subcellular location is the cytoplasm. It localises to the cell projection. It is found in the ruffle membrane. Functionally, suppresses the insulin receptor and EGFR-transduced MAPK signaling pathway, but does not inhibit MAPK activation by a constitutively active mutant Ras. Probably impairs the formation of GTP-Ras. Inhibits Ras-independent, but not Ras-dependent, activation of RAF1. Represses integrin-mediated cell spreading via inhibition of TESK1-mediated phosphorylation of cofilin. The polypeptide is Protein sprouty homolog 4 (SPRY4) (Bos taurus (Bovine)).